A 583-amino-acid polypeptide reads, in one-letter code: Malonate--CoA ligase ACSF3, mitochondrial (583 aa).

A mitochondrion-targeting transit peptide spans 1-27 (MPPHLALPFRRLFWSLASSQLIPRRHR). ATP-binding positions include 202–210 (TSGTTGRPK), Asp-455, Arg-469, and Lys-561.

Belongs to the ATP-dependent AMP-binding enzyme family.

The protein resides in the mitochondrion. It catalyses the reaction tetracosanoate + ATP + CoA = tetracosanoyl-CoA + AMP + diphosphate. The catalysed reaction is malonate + ATP + CoA = malonyl-CoA + AMP + diphosphate. Its function is as follows. Catalyzes the initial reaction in intramitochondrial fatty acid synthesis, by activating malonate and methylmalonate, but not acetate, into their respective CoA thioester. May have some preference toward very-long-chain substrates. The chain is Malonate--CoA ligase ACSF3, mitochondrial from Mus musculus (Mouse).